The chain runs to 310 residues: Putative HTH-type transcriptional regulatory protein YN1551_1579 (310 aa).

Positions 125–180 (LKHKREEMGYSIGDVAKFLGVSRKAIYDYEKGDSDVSLEVAEKLIDLFGDDIIGDV) constitute an HTH cro/C1-type domain. The H-T-H motif DNA-binding region spans 136-155 (IGDVAKFLGVSRKAIYDYEK).

The sequence is that of Putative HTH-type transcriptional regulatory protein YN1551_1579 from Saccharolobus islandicus (strain Y.N.15.51 / Yellowstone #2) (Sulfolobus islandicus).